Reading from the N-terminus, the 323-residue chain is Voltage-dependent calcium channel gamma-2 subunit (323 aa).

A helical membrane pass occupies residues 10–30 (MLLTTVGAFAAFSLMTIAVGT). The N-linked (GlcNAc...) asparagine glycan is linked to Asn-48. The next 3 helical transmembrane spans lie at 104–124 (SSIFPILSVILLFMGGLCIAA), 134–154 (IILSAGIFFVSAGLSNIIGII), and 182–202 (FGALSFIIAEMVGVLAVHMFI). The segment at 233–261 (YQRRSRSSSRSTEPSHSRDASPVGIKGFN) is disordered. A Phosphoserine modification is found at Ser-253. Tyr-271 is modified (phosphotyrosine). Thr-321 carries the phosphothreonine modification.

Belongs to the PMP-22/EMP/MP20 family. CACNG subfamily. In terms of assembly, the L-type calcium channel is composed of five subunits: alpha-1, alpha-2/delta, beta and gamma. Interacts with the PDZ domains of DLG4/PSD-95 and DLG1/SAP97. May interact with GOPC. Acts as an auxiliary subunit for AMPA-selective glutamate receptors (AMPARs). Found in a complex with GRIA1, GRIA2, GRIA3, GRIA4, CNIH2, CNIH3, CACNG3, CACNG4, CACNG5, CACNG7 and CACNG8. Interacts with GRIA1 and GRIA2. Interacts with MPP2. Phosphorylation of Thr-321 impairs interaction with DLG1 and DLG4. Brain.

Its subcellular location is the membrane. It is found in the synapse. The protein resides in the synaptosome. Regulates the trafficking and gating properties of AMPA-selective glutamate receptors (AMPARs). Promotes their targeting to the cell membrane and synapses and modulates their gating properties by slowing their rates of activation, deactivation and desensitization. Does not show subunit-specific AMPA receptor regulation and regulates all AMPAR subunits. Thought to stabilize the calcium channel in an inactivated (closed) state. The protein is Voltage-dependent calcium channel gamma-2 subunit (CACNG2) of Homo sapiens (Human).